The chain runs to 93 residues: Large ribosomal subunit protein uL23 (93 aa).

This sequence belongs to the universal ribosomal protein uL23 family. In terms of assembly, part of the 50S ribosomal subunit. Contacts protein L29, and trigger factor when it is bound to the ribosome.

One of the early assembly proteins it binds 23S rRNA. One of the proteins that surrounds the polypeptide exit tunnel on the outside of the ribosome. Forms the main docking site for trigger factor binding to the ribosome. The polypeptide is Large ribosomal subunit protein uL23 (Aliarcobacter butzleri (strain RM4018) (Arcobacter butzleri)).